Here is a 782-residue protein sequence, read N- to C-terminus: DnaJ homolog subfamily C member 16 (782 aa).

The N-terminal stretch at 1 to 25 (MEVRKLSISWQFLIVLVLILQILSA) is a signal peptide. Residues 26–535 (LDFDPYKVLG…DSIFHNNWRE (510 aa)) are Cytoplasmic-facing. A J domain is found at 29-93 (DPYKVLGVSR…EKRSNYDQYG (65 aa)). The region spanning 119-247 (FYFDESFFHF…LRQFVESLLP (129 aa)) is the Thioredoxin domain. The helical; Anchor for type IV membrane protein transmembrane segment at 536 to 556 (MMPLLSLIFSALFILFGTVIV) threads the bilayer. Residues 557-782 (QAFSDSSDER…FYIPSWPELD (226 aa)) lie on the Extracellular side of the membrane. The disordered stretch occupies residues 562-593 (SSDERESSPPDKEEAQEKTGKTEPSFTKENSS). The segment covering 563–582 (SDERESSPPDKEEAQEKTGK) has biased composition (basic and acidic residues). Over residues 583 to 593 (TEPSFTKENSS) the composition is skewed to polar residues. A glycan (N-linked (GlcNAc...) asparagine) is linked at asparagine 631.

It localises to the endoplasmic reticulum membrane. Functionally, plays an important role in regulating the size of autophagosomes during the formation process. This is DnaJ homolog subfamily C member 16 (DNAJC16) from Pongo abelii (Sumatran orangutan).